Reading from the N-terminus, the 391-residue chain is Mannose-6-phosphate isomerase (391 aa).

Zn(2+)-binding residues include Q97, H99, E134, and H255. Residue R274 is part of the active site. K280 carries the N6-acetyllysine modification.

This sequence belongs to the mannose-6-phosphate isomerase type 1 family. Requires Zn(2+) as cofactor.

The protein localises to the cytoplasm. The catalysed reaction is D-mannose 6-phosphate = D-fructose 6-phosphate. Involved in the conversion of glucose to GDP-L-fucose, which can be converted to L-fucose, a capsular polysaccharide. The sequence is that of Mannose-6-phosphate isomerase (manA) from Escherichia coli (strain K12).